Here is a 343-residue protein sequence, read N- to C-terminus: Fanconi anemia group F protein (343 aa).

Belongs to the multisubunit FA complex composed of FANCA, FANCB, FANCC, FANCE, FANCF, FANCG, FANCL/PHF9 and FANCM. In complex with FANCA, FANCG and FANCL, but not with FANCC, nor FANCE, interacts with HES1; this interaction may be essential for the stability and nuclear localization of FA core complex proteins.

Its subcellular location is the nucleus. Functionally, DNA repair protein that may operate in a postreplication repair or a cell cycle checkpoint function. May be implicated in interstrand DNA cross-link repair and in the maintenance of normal chromosome stability. In Mus musculus (Mouse), this protein is Fanconi anemia group F protein.